A 222-amino-acid polypeptide reads, in one-letter code: Charged multivesicular body protein 4a (222 aa).

Disordered stretches follow at residues 1-21 (MSGL…TPEE) and 177-222 (LLHV…EWVS). Residues 1-116 (MSGLGRLFGR…ELAAQGLKKA (116 aa)) form an interaction with phosphoinosides region. The tract at residues 1–150 (MSGLGRLFGR…QISDAISRPV (150 aa)) is intramolecular interaction with C-terminus. Coiled-coil stretches lie at residues 20 to 105 (EEAI…VLRT) and 155 to 180 (DVDE…LLHV). The intramolecular interaction with N-terminus stretch occupies residues 151-222 (GFGDDVDEDE…ELKQLAEWVS (72 aa)). Residue Ser-196 is modified to Phosphoserine.

The protein belongs to the SNF7 family. As to quaternary structure, probable core component of the endosomal sorting required for transport complex III (ESCRT-III). ESCRT-III components are thought to multimerize to form a flat lattice on the perimeter membrane of the endosome. Several assembly forms of ESCRT-III may exist that interact and act sequentially. Self-associates; overexpression leads to the assembly of filaments that curve and associate to create circular rings. Interacts with CHMP2A. Interacts with CHMP3; the interaction requires the release of CHMP4A autoinhibition. Interacts with CHMP4B. Interacts with CHMP4C. Interacts with CHMP6. Interacts with VPS4A. Interacts with PDCD6IP; the interaction is direct.

The protein resides in the cytoplasmic vesicle membrane. The protein localises to the late endosome membrane. In terms of biological role, probable core component of the endosomal sorting required for transport complex III (ESCRT-III) which is involved in multivesicular bodies (MVBs) formation and sorting of endosomal cargo proteins into MVBs. MVBs contain intraluminal vesicles (ILVs) that are generated by invagination and scission from the limiting membrane of the endosome and mostly are delivered to lysosomes enabling degradation of membrane proteins, such as stimulated growth factor receptors, lysosomal enzymes and lipids. The MVB pathway appears to require the sequential function of ESCRT-O, -I,-II and -III complexes. ESCRT-III proteins mostly dissociate from the invaginating membrane before the ILV is released. The ESCRT machinery also functions in topologically equivalent membrane fission events, such as the terminal stages of cytokinesis and the budding of enveloped viruses (lentiviruses). ESCRT-III proteins are believed to mediate the necessary vesicle extrusion and/or membrane fission activities, possibly in conjunction with the AAA ATPase VPS4. When overexpressed, membrane-assembled circular arrays of CHMP4A filaments can promote or stabilize negative curvature and outward budding. CHMP4A/B/C are required for the exosomal release of SDCBP, CD63 and syndecan. This is Charged multivesicular body protein 4a (CHMP4A) from Bos taurus (Bovine).